A 234-amino-acid polypeptide reads, in one-letter code: CKLF-like MARVEL transmembrane domain-containing protein 4 (234 aa).

Residues Met1–Glu11 show a composition bias toward acidic residues. The tract at residues Met1–Arg38 is disordered. The span at Ser15–Ser25 shows a compositional bias: low complexity. One can recognise an MARVEL domain in the interval Tyr49–Arg176. Helical transmembrane passes span Val59 to Ser79, Tyr85 to Phe105, Leu123 to Leu143, and Ile151 to Ala171. Position 194 is a phosphoserine (Ser194).

This sequence belongs to the chemokine-like factor family. Interacts with PD-L1/CD274 and CMTM6. In terms of tissue distribution, highly expressed in testis and prostate.

Its subcellular location is the membrane. Functionally, acts as a backup for CMTM6 to regulate plasma membrane expression of PD-L1/CD274, an immune inhibitory ligand critical for immune tolerance to self and antitumor immunity. May protect PD-L1/CD274 from being polyubiquitinated and targeted for degradation. This chain is CKLF-like MARVEL transmembrane domain-containing protein 4, found in Homo sapiens (Human).